The chain runs to 372 residues: tRNA-specific 2-thiouridylase MnmA (372 aa).

Residues G11–S18 and M37 contribute to the ATP site. Residues N97–D99 are interaction with target base in tRNA. The Nucleophile role is filled by C102. A disulfide bond links C102 and C199. An ATP-binding site is contributed by G126. The tract at residues K149–Q151 is interaction with tRNA. The active-site Cysteine persulfide intermediate is C199. Residues R309 to Y310 are interaction with tRNA.

This sequence belongs to the MnmA/TRMU family.

It localises to the cytoplasm. The catalysed reaction is S-sulfanyl-L-cysteinyl-[protein] + uridine(34) in tRNA + AH2 + ATP = 2-thiouridine(34) in tRNA + L-cysteinyl-[protein] + A + AMP + diphosphate + H(+). In terms of biological role, catalyzes the 2-thiolation of uridine at the wobble position (U34) of tRNA, leading to the formation of s(2)U34. The polypeptide is tRNA-specific 2-thiouridylase MnmA (Staphylococcus epidermidis (strain ATCC 35984 / DSM 28319 / BCRC 17069 / CCUG 31568 / BM 3577 / RP62A)).